Here is a 388-residue protein sequence, read N- to C-terminus: (S)-8-oxocitronellyl enol synthase ISY1 (388 aa).

NADP(+) contacts are provided by residues 35–37 (TGI), 63–64 (RR), 81–82 (DV), 105–106 (TW), and Gln-143. Active-site residues include Lys-147 and Tyr-178. Residues Tyr-178, Ile-205, and 212–214 (SMM) contribute to the NADP(+) site.

Belongs to the short-chain dehydrogenases/reductases (SDR) family.

The catalysed reaction is (S)-8-oxocitronellyl enol + NADP(+) = (6E)-8-oxogeranial + NADPH + H(+). It catalyses the reaction (S)-8-oxocitronellyl enol + NAD(+) = (6E)-8-oxogeranial + NADH + H(+). In terms of biological role, iridoid synthase that catalyzes the first step in generation of the iridoid ring scaffold using the linear monoterpene (6E)-8-oxogeranial as substrate. Iridoids comprise a large family of distinctive bicyclic monoterpenes that possess a wide range of pharmacological activities, including anticancer, anti-inflammatory, antifungal and antibacterial activities. Catalyzes the conversion of the linear monoterpene (6E)-8-oxogeranial to (S)-8-oxocitronellyl enol, a precursor of nepetalactones, which are metabolites that are both insect-repellent and have euphoric effect in cats. The sequence is that of (S)-8-oxocitronellyl enol synthase ISY1 from Nepeta cataria (Catnip).